Consider the following 471-residue polypeptide: Tyrosine--tRNA ligase (471 aa).

An L-tyrosine-binding site is contributed by Tyr41. A 'HIGH' region motif is present at residues 46–55 (PTAPSLHVGN). L-tyrosine is bound by residues Tyr176 and Gln180. Positions 236–240 (KFGKT) match the 'KMSKS' region motif. Lys239 contacts ATP. The S4 RNA-binding domain maps to 403-471 (DLITHILQKV…GKKHLAAVFY (69 aa)).

Belongs to the class-I aminoacyl-tRNA synthetase family. TyrS type 1 subfamily. In terms of assembly, homodimer.

It localises to the cytoplasm. The enzyme catalyses tRNA(Tyr) + L-tyrosine + ATP = L-tyrosyl-tRNA(Tyr) + AMP + diphosphate + H(+). Catalyzes the attachment of tyrosine to tRNA(Tyr) in a two-step reaction: tyrosine is first activated by ATP to form Tyr-AMP and then transferred to the acceptor end of tRNA(Tyr). The chain is Tyrosine--tRNA ligase from Tropheryma whipplei (strain Twist) (Whipple's bacillus).